We begin with the raw amino-acid sequence, 230 residues long: Cytochrome c oxidase subunit 2 (230 aa).

Residues 1–29 (NNFFQGYNLLFQHSLFASYMDWFHAFNCS) are Mitochondrial intermembrane-facing. The chain crosses the membrane as a helical span at residues 30 to 50 (LLLGVLVFVTLLFGYLIFSTF). At 51 to 63 (YFKSKKIEYQFGE) the chain is on the mitochondrial matrix side. A helical membrane pass occupies residues 64–84 (LLCSIFPTIILLMQMVPSLSL). Topologically, residues 85–230 (LYYYGLMNLD…FKSWCFGTME (146 aa)) are mitochondrial intermembrane. Residues His163, Cys198, Glu200, Cys202, His206, and Met209 each coordinate Cu cation. Glu200 contacts Mg(2+).

It belongs to the cytochrome c oxidase subunit 2 family. As to quaternary structure, component of the cytochrome c oxidase (complex IV, CIV), a multisubunit enzyme composed of a catalytic core of 3 subunits and several supernumerary subunits. The complex exists as a monomer or a dimer and forms supercomplexes (SCs) in the inner mitochondrial membrane with ubiquinol-cytochrome c oxidoreductase (cytochrome b-c1 complex, complex III, CIII). It depends on Cu cation as a cofactor.

The protein resides in the mitochondrion inner membrane. The enzyme catalyses 4 Fe(II)-[cytochrome c] + O2 + 8 H(+)(in) = 4 Fe(III)-[cytochrome c] + 2 H2O + 4 H(+)(out). In terms of biological role, component of the cytochrome c oxidase, the last enzyme in the mitochondrial electron transport chain which drives oxidative phosphorylation. The respiratory chain contains 3 multisubunit complexes succinate dehydrogenase (complex II, CII), ubiquinol-cytochrome c oxidoreductase (cytochrome b-c1 complex, complex III, CIII) and cytochrome c oxidase (complex IV, CIV), that cooperate to transfer electrons derived from NADH and succinate to molecular oxygen, creating an electrochemical gradient over the inner membrane that drives transmembrane transport and the ATP synthase. Cytochrome c oxidase is the component of the respiratory chain that catalyzes the reduction of oxygen to water. Electrons originating from reduced cytochrome c in the intermembrane space (IMS) are transferred via the dinuclear copper A center (CU(A)) of subunit 2 and heme A of subunit 1 to the active site in subunit 1, a binuclear center (BNC) formed by heme A3 and copper B (CU(B)). The BNC reduces molecular oxygen to 2 water molecules using 4 electrons from cytochrome c in the IMS and 4 protons from the mitochondrial matrix. In Caenorhabditis remanei (Caenorhabditis vulgaris), this protein is Cytochrome c oxidase subunit 2 (cox-2).